The sequence spans 430 residues: Retinoic acid receptor RXR-alpha-A (430 aa).

Residues 1–20 are compositionally biased toward low complexity; sequence MHPSLLSPTSLGPSGSLHSP. Disordered regions lie at residues 1–25 and 48–73; these read MHPSLLSPTSLGPSGSLHSPISTLS and ASPGVGYGPSISPQLNSHMNSVSSSE. Residues 1–99 form a modulating region; that stretch reads MHPSLLSPTS…QPSGTPLSLT (99 aa). Over residues 58-72 the composition is skewed to polar residues; sequence ISPQLNSHMNSVSSS. Positions 100-175 form a DNA-binding region, nuclear receptor; sequence KHICAICGDR…MGMKREAVQE (76 aa). Cysteine 103, cysteine 106, cysteine 120, and cysteine 123 together coordinate Zn(2+). The segment at 103–123 adopts an NR C4-type zinc-finger fold; the sequence is CAICGDRSSGKHYGVYSCEGC. The interval 128-133 is nuclear localization signal; the sequence is KRTVRK. Residues cysteine 139, cysteine 145, cysteine 155, and cysteine 158 each contribute to the Zn(2+) site. The NR C4-type zinc-finger motif lies at 139–158; that stretch reads CRDNKDCVIDKRQRNRCQYC. Basic and acidic residues predominate over residues 174–186; it reads QEERQRAKERSEN. The disordered stretch occupies residues 174–196; the sequence is QEERQRAKERSENEVESTSSANE. Residues 176 to 192 are hinge; the sequence is ERQRAKERSENEVESTS. Positions 195-426 constitute an NR LBD domain; it reads NEDMPVEKIL…TFLMEMLEAP (232 aa). Arginine 284 and alanine 295 together coordinate 9-cis-retinoate. Positions 284 and 295 each coordinate all-trans-retinoate. The interval 316–336 is required for nuclear export; the sequence is RVLTELVSKMRDMQMDKTELG. Residues 415-426 are AF-2; sequence IDTFLMEMLEAP.

The protein belongs to the nuclear hormone receptor family. NR2 subfamily. Homodimer. Heterodimer; with a rar molecule. Binds DNA preferentially as a rar/rxr heterodimer.

It localises to the nucleus. Its function is as follows. Receptor for retinoic acid that acts as a transcription factor. Forms homo- or heterodimers with retinoic acid receptors (rars) and binds to target response elements in response to their ligands, all-trans or 9-cis retinoic acid, to regulate gene expression in various biological processes. The rar/rxr heterodimers bind to the retinoic acid response elements (RARE) composed of tandem 5'-AGGTCA-3' sites known as DR1-DR5 to regulate transcription. The high affinity ligand for rxrs is 9-cis retinoic acid. In the absence of ligand, the rar/rxr heterodimers associate with a multiprotein complex containing transcription corepressors that induce histone deacetylation, chromatin condensation and transcriptional suppression. On ligand binding, the corepressors dissociate from the receptors and coactivators are recruited leading to transcriptional activation. The protein is Retinoic acid receptor RXR-alpha-A of Danio rerio (Zebrafish).